The chain runs to 101 residues: Anti-sigma factor RshA (101 aa).

The inhibits SigH sigma factor activity stretch occupies residues 9 to 15 (DAHADHD). Cys-23 provides a ligand contact to iron-sulfur cluster. 2 inhibits SigH sigma factor activity regions span residues 28 to 34 (AEVWTLL) and 38 to 44 (CTPETRE). Iron-sulfur cluster is bound by residues His-49, Cys-53, and Cys-56. Thr-94 carries the phosphothreonine modification.

This sequence belongs to the zinc-associated anti-sigma factor (ZAS) superfamily. Interacts with cognate sigma factor SigH under reducing conditions. Binding inhibits the interaction of SigH with the RNA polymerase catalytic core. Iron-sulfur cluster serves as cofactor. Post-translationally, phosphorylated, probably by PknB. Phosphorylation decreases interaction with SigH, leading to increased SigH-mediated transcription.

In terms of biological role, an redox-regulated anti-sigma factor for extracytoplasmic function (ECF) sigma factor SigH. ECF sigma factors are held in an inactive form by a cognate anti-sigma factor. RshA and some peptides derived from it inhibit the sigma factor activity of SigH. Probably releases SigH during oxidative stress. This Mycobacterium tuberculosis (strain CDC 1551 / Oshkosh) protein is Anti-sigma factor RshA (rshA).